Consider the following 147-residue polypeptide: Large ribosomal subunit protein uL15 (147 aa).

Residues 1–57 (MRLHDVKPQKGSKKRKKRVARGISAGQGASAGLGMRGQKSRSGSGTRPGFEGGQQPL) are disordered. A compositionally biased stretch (basic residues) spans 10-20 (KGSKKRKKRVA).

Belongs to the universal ribosomal protein uL15 family. In terms of assembly, part of the 50S ribosomal subunit.

Functionally, binds to the 23S rRNA. This Nostoc punctiforme (strain ATCC 29133 / PCC 73102) protein is Large ribosomal subunit protein uL15.